The sequence spans 545 residues: Labda-7,13-dienyl diphosphate synthase (545 aa).

The DXDDTA motif signature appears at 315–320; that stretch reads DADDTA. The RXXDGSW motif motif lies at 444–450; that stretch reads RRTDGSW. Positions 526–545 are disordered; it reads LPAPAPVPPGFDAARTGPAD.

It belongs to the terpene synthase family. The cofactor is Mg(2+).

The enzyme catalyses (2E,6E,10E)-geranylgeranyl diphosphate = (13E)-labda-7,13-dien-15-yl diphosphate. Functionally, involved in the biosynthesis of the labdane-type bicyclic diterpene labda-7,13(16),14-triene. Catalyzes the conversion of geranylgeranyl diphosphate (GGDP) into labda-7,13(E)-dienyl diphosphate. This chain is Labda-7,13-dienyl diphosphate synthase, found in Streptomyces clavuligerus.